The primary structure comprises 265 residues: Glutamate racemase (265 aa).

Residues aspartate 9–serine 10 and tyrosine 41–serine 42 each bind substrate. Cysteine 73 serves as the catalytic Proton donor/acceptor. Residue asparagine 74 to threonine 75 participates in substrate binding. Cysteine 184 serves as the catalytic Proton donor/acceptor. Residue threonine 185–histidine 186 coordinates substrate.

This sequence belongs to the aspartate/glutamate racemases family.

It catalyses the reaction L-glutamate = D-glutamate. It functions in the pathway cell wall biogenesis; peptidoglycan biosynthesis. Functionally, provides the (R)-glutamate required for cell wall biosynthesis. The chain is Glutamate racemase from Haemophilus ducreyi (strain 35000HP / ATCC 700724).